A 551-amino-acid chain; its full sequence is Calnexin homolog (551 aa).

The first 26 residues, 1–26 (MVDRKEIPLAMGLLAVLLFFVASSSS), serve as a signal peptide directing secretion. The Lumenal segment spans residues 27–480 (FHLVRASDEV…EKGEKQPNLT (454 aa)). Residues Ser-44 and Asp-75 each coordinate Ca(2+). A disulfide bond links Cys-118 and Cys-153. Tyr-122 and Lys-124 together coordinate an alpha-D-glucoside. A glycan (N-linked (GlcNAc...) asparagine) is linked at Asn-140. Residues Tyr-144 and Asp-151 each coordinate an alpha-D-glucoside. Positions 226–330 (ALIPSKTIPD…CGEWKRPTKS (105 aa)) are disordered. Residues 233-364 (IPDPDDKKPE…QEIPNPEYFE (132 aa)) are p domain (Extended arm). 2 stretches are compositionally biased toward basic and acidic residues: residues 234–269 (PDPD…PREI) and 276–295 (KPEP…AKPE). Tandem repeats lie at residues 235–246 (DPDDKKPEDWDE), 252–263 (DPEAVKPEDWDE), 271–282 (DEEAEKPEPWLD), 289–299 (DPEAKPEDWDD), and 303–313 (GEWEAPKIENP). 4 X approximate repeats stretches follow at residues 235-299 (DPDD…DWDD) and 303-360 (GEWE…IPNP). Over residues 296–305 (DWDDEEDGEW) the composition is skewed to acidic residues. Cys-315 and Cys-321 are disulfide-bonded. 3 tandem repeats follow at residues 322 to 332 (GEWKRPTKSNP), 336 to 346 (GKWSAPYIDNP), and 350 to 360 (GIWKPQEIPNP). Glu-379 lines the an alpha-D-glucoside pocket. A Ca(2+)-binding site is contributed by Asp-390. Residue Asn-478 is glycosylated (N-linked (GlcNAc...) asparagine). The helical transmembrane segment at 481–501 (IGIIVSVVIVFVSIFFRLIFG) threads the bilayer. Over 502 to 551 (GKKPANVEANVEKKKTNTETTSKQDGGEKEDNKEKEETANPPRRRPKRDN) the chain is Cytoplasmic. Residues 510–551 (ANVEKKKTNTETTSKQDGGEKEDNKEKEETANPPRRRPKRDN) are disordered. The span at 526–539 (DGGEKEDNKEKEET) shows a compositional bias: basic and acidic residues.

It belongs to the calreticulin family. In terms of tissue distribution, in vegetative and flowering tissues.

The protein resides in the endoplasmic reticulum membrane. Its function is as follows. Calcium-binding protein that interacts with newly synthesized monoglucosylated glycoproteins in the endoplasmic reticulum. It may act in assisting protein assembly and/or in the retention within the ER of unassembled protein subunits. It seems to play a major role in the quality control apparatus of the ER by the retention of incorrectly folded proteins. This Pisum sativum (Garden pea) protein is Calnexin homolog.